Consider the following 97-residue polypeptide: Osteocalcin (97 aa).

Residues 1-18 (MKTLAILVLCSLAAICLT) form the signal peptide. The propeptide occupies 19–52 (SSASAGAQPAGDSPVQGGLFMEKDQASAVVRQTR). Positions 53–93 (AAKELTLAQTESLREVCETNMACDEMADAQGIVAAYQAFYG) constitute a Gla domain. The Ca(2+) site is built by glutamate 63, glutamate 67, glutamate 70, and aspartate 76. Residues glutamate 63, glutamate 67, and glutamate 70 each carry the 4-carboxyglutamate modification. Cysteine 69 and cysteine 75 are oxidised to a cystine. Glutamate 77 carries the 4-carboxyglutamate modification.

This sequence belongs to the osteocalcin/matrix Gla protein family. Gamma-carboxyglutamate residues are formed by vitamin K dependent carboxylation by GGCX. These residues are essential for the binding of calcium. In the branchial arches, BGP is found outside the chondrocyte-containing zone. It is found in some cells in the basal zone of the branchial filaments, near the branchial arches, and within the extracellular matrix in the medial zone. In the vertebra, BGP is found in the mineralized bone matrix.

It is found in the secreted. The carboxylated form is one of the main organic components of the bone matrix, which constitutes 1-2% of the total bone protein. The carboxylated form binds strongly to apatite and calcium. This is Osteocalcin (bglap) from Argyrosomus regius (Meagre).